We begin with the raw amino-acid sequence, 199 residues long: Large ribosomal subunit protein mL51 (199 aa).

The N-terminal 15 residues, 1–15 (MNSNSLSRFTSIVRT), are a transit peptide targeting the mitochondrion.

This sequence belongs to the mitochondrion-specific ribosomal protein mL51 family. In terms of assembly, component of the mitochondrial ribosome large subunit (39S) which comprises a 16S rRNA and about 50 distinct proteins.

It is found in the mitochondrion. The sequence is that of Large ribosomal subunit protein mL51 (mrpl-51) from Caenorhabditis elegans.